The primary structure comprises 514 residues: Prespore vesicle protein (514 aa).

A signal peptide spans 1–18; that stretch reads MRLYLLSLILVFYASVSS. Follistatin-like domains are found at residues 40-62 and 240-262; these read LCGT…YICR and TCET…AQCI. Polar residues predominate over residues 285 to 297; sequence QRNAKPAQQQRSA. Positions 285–514 are disordered; that stretch reads QRNAKPAQQQ…QARPATQKRN (230 aa). Composition is skewed to low complexity over residues 328-391, 398-413, and 424-457; these read QHNA…HTAA, AAQQ…AKPA, and AAQQ…KPAK. Residues 480–508 show a composition bias toward polar residues; sequence RIRQQNLVKQAAQKKQTSQRAASKNQARP.

In Dictyostelium discoideum (Social amoeba), this protein is Prespore vesicle protein (psvA).